The chain runs to 544 residues: Probable protein kinase UbiB (544 aa).

A Protein kinase domain is found at 123 to 501; sequence DFDIEPLASA…KRQQATGKFL (379 aa). ATP contacts are provided by residues 129 to 137 and Lys-152; that span reads LASASIAQV. Asp-287 serves as the catalytic Proton acceptor. The chain crosses the membrane as a helical span at residues 500-520; it reads FLFGVGATLVVCSAILVSSPY.

This sequence belongs to the ABC1 family. UbiB subfamily.

Its subcellular location is the cell inner membrane. The protein operates within cofactor biosynthesis; ubiquinone biosynthesis [regulation]. Is probably a protein kinase regulator of UbiI activity which is involved in aerobic coenzyme Q (ubiquinone) biosynthesis. The polypeptide is Probable protein kinase UbiB (Vibrio atlanticus (strain LGP32) (Vibrio splendidus (strain Mel32))).